The chain runs to 272 residues: Tryptophan synthase alpha chain (272 aa).

Catalysis depends on proton acceptor residues glutamate 49 and glutamate 60.

The protein belongs to the TrpA family. As to quaternary structure, tetramer of two alpha and two beta chains.

It catalyses the reaction (1S,2R)-1-C-(indol-3-yl)glycerol 3-phosphate + L-serine = D-glyceraldehyde 3-phosphate + L-tryptophan + H2O. The protein operates within amino-acid biosynthesis; L-tryptophan biosynthesis; L-tryptophan from chorismate: step 5/5. In terms of biological role, the alpha subunit is responsible for the aldol cleavage of indoleglycerol phosphate to indole and glyceraldehyde 3-phosphate. This chain is Tryptophan synthase alpha chain, found in Legionella pneumophila (strain Lens).